Here is a 327-residue protein sequence, read N- to C-terminus: Phenylalanine--tRNA ligase alpha subunit (327 aa).

E252 provides a ligand contact to Mg(2+).

It belongs to the class-II aminoacyl-tRNA synthetase family. Phe-tRNA synthetase alpha subunit type 1 subfamily. Tetramer of two alpha and two beta subunits. Mg(2+) serves as cofactor.

The protein localises to the cytoplasm. The catalysed reaction is tRNA(Phe) + L-phenylalanine + ATP = L-phenylalanyl-tRNA(Phe) + AMP + diphosphate + H(+). This Serratia proteamaculans (strain 568) protein is Phenylalanine--tRNA ligase alpha subunit.